We begin with the raw amino-acid sequence, 816 residues long: Protein EFR3 homolog B (816 aa).

A compositionally biased stretch (polar residues) spans serine 206 to glutamine 219. The tract at residues serine 206–glutamate 230 is disordered. Basic and acidic residues predominate over residues serine 221–glutamate 230.

The protein belongs to the EFR3 family. In terms of assembly, component of a phosphatidylinositol 4-kinase (PI4K) complex. Post-translationally, palmitoylated at its N-terminus, anchoring the protein to the plasma membrane.

The protein localises to the cell membrane. In terms of biological role, component of a complex required to localize phosphatidylinositol 4-kinase (PI4K) to the plasma membrane. The complex acts as a regulator of phosphatidylinositol 4-phosphate (PtdIns(4)P) synthesis. In the complex, efr3b probably acts as the membrane-anchoring component. The polypeptide is Protein EFR3 homolog B (efr3b) (Danio rerio (Zebrafish)).